Here is a 348-residue protein sequence, read N- to C-terminus: uncharacterized protein (348 aa).

May be involved in apoptosis regulation. This is an uncharacterized protein from Rattus norvegicus (Rat).